We begin with the raw amino-acid sequence, 201 residues long: L(+)-tartrate dehydratase subunit beta (201 aa).

His37 is a catalytic residue.

This sequence belongs to the class-I fumarase family. In terms of assembly, heterotetramer of two alpha and two beta subunits.

The enzyme catalyses (2R,3R)-tartrate = oxaloacetate + H2O. The polypeptide is L(+)-tartrate dehydratase subunit beta (ttdB) (Shigella boydii serotype 4 (strain Sb227)).